The primary structure comprises 162 residues: UPF0114 protein Sden_0436 (162 aa).

The next 3 helical transmembrane spans lie at Ile15–Phe35, Leu53–Val73, and Ile136–Leu156.

This sequence belongs to the UPF0114 family.

It localises to the cell membrane. The sequence is that of UPF0114 protein Sden_0436 from Shewanella denitrificans (strain OS217 / ATCC BAA-1090 / DSM 15013).